A 296-amino-acid chain; its full sequence is Phosphate transport system permease protein PstA (296 aa).

Over 1 to 28 (MAMVEMQTTAALAESRRKMQARRRLKNR) the chain is Cytoplasmic. The helical transmembrane segment at 29-50 (IALTLSMATMAFGLFWLIWILM) threads the bilayer. At 51–82 (STITRGIDGMSLALFTEMTPPPNTEGGGLANA) the chain is on the periplasmic side. A helical transmembrane segment spans residues 83-102 (LAGSGLLILWATVFGTPLGI). Residues 83-286 (LAGSGLLILW…LCVLLLNILA (204 aa)) form the ABC transmembrane type-1 domain. Residues 103-126 (MAGIYLAEYGRKSWLAEVIRFIND) lie on the Cytoplasmic side of the membrane. The chain crosses the membrane as a helical span at residues 127 to 146 (ILLSAPSIVVGLFVYTIVVA). Residues 147-150 (QMEH) lie on the Periplasmic side of the membrane. A helical membrane pass occupies residues 151–169 (FSGWAGVIALALLQVPIVI). Topologically, residues 170–204 (RTTENMLKLVPYSLREAAYALGTPKWKMISAITLK) are cytoplasmic. The chain crosses the membrane as a helical span at residues 205-223 (ASVSGIMTGILLAIARIAG). Over 224 to 266 (ETAPLLFTALSNQFWSTDMMQPIANLPVTIFKFAMSPFAEWQQ) the chain is Periplasmic. The chain crosses the membrane as a helical span at residues 267–286 (LAWAGVLIITLCVLLLNILA). The Cytoplasmic segment spans residues 287–296 (RVVFAKNKHG).

This sequence belongs to the binding-protein-dependent transport system permease family. CysTW subfamily.

The protein resides in the cell inner membrane. Part of the binding-protein-dependent transport system for phosphate; probably responsible for the translocation of the substrate across the membrane. The protein is Phosphate transport system permease protein PstA (pstA) of Escherichia coli (strain K12).